Here is a 404-residue protein sequence, read N- to C-terminus: MNQTPKLNSFRAGPDEDGRFGIYGGRFVAETLMPLILDLQEEWEKAKNDPAFQAELKSLGTHYIGRPSPLYFAERLTAELGGAKIYFKREELNHTGSHKINNCIGQILLAKRMGKTRIIAETGAGQHGVASATVAARFGLPCVVYMGATDVERQAPNVFRMKLLGAEVIPVTAGSGTLKDAMNEALRDWVTNVDDTYYLIGTAAGPHPYPEMVRDFQAVIGTEAKQQMLEAEGRLPDLVIAAVGGGSNAIGIFHPFLDDESVKIVGVEAGGKGLQGDEHCASITAGSPGVLHGNRTYLLQDGDGQIKEGHSISAGLDYPGIGPEHSWLNDIGRAEYVPIMDHEALEAFQTLTRLEGIIPALEPSHALAEVIKRAPKMGKDEIILMNLSGRGDKDIFTVAKILGM.

N6-(pyridoxal phosphate)lysine is present on Lys99.

This sequence belongs to the TrpB family. As to quaternary structure, tetramer of two alpha and two beta chains. Pyridoxal 5'-phosphate serves as cofactor.

The enzyme catalyses (1S,2R)-1-C-(indol-3-yl)glycerol 3-phosphate + L-serine = D-glyceraldehyde 3-phosphate + L-tryptophan + H2O. It functions in the pathway amino-acid biosynthesis; L-tryptophan biosynthesis; L-tryptophan from chorismate: step 5/5. In terms of biological role, the beta subunit is responsible for the synthesis of L-tryptophan from indole and L-serine. The protein is Tryptophan synthase beta chain of Rhizobium rhizogenes (strain K84 / ATCC BAA-868) (Agrobacterium radiobacter).